Consider the following 673-residue polypeptide: Bifunctional lycopene cyclase/phytoene synthase (673 aa).

The interval 1–251 is lycopene beta-cyclase; the sequence is MTALAYYQIH…IVLGLSACDH (251 aa). The next 7 membrane-spanning stretches (helical) occupy residues 9 to 29, 36 to 56, 81 to 101, 117 to 137, 157 to 177, 187 to 207, and 226 to 246; these read IHLI…SPIL, KISI…SWII, YEEY…YVLA, SALS…LFTA, LSLL…EYAF, TIAA…VAVG, and VLPI…VLGL. A phytoene synthase region spans residues 258-673; the sequence is LHGRTIYGNK…SVVMSGWEGQ (416 aa). The segment at 376 to 399 is disordered; that stretch reads KILSSPLLPPSHPSRPTGMYPLPP.

In the N-terminal section; belongs to the lycopene beta-cyclase family. This sequence in the C-terminal section; belongs to the phytoene/squalene synthase family.

Its subcellular location is the membrane. It carries out the reaction all-trans-lycopene = gamma-carotene. The catalysed reaction is gamma-carotene = all-trans-beta-carotene. It catalyses the reaction 2 (2E,6E,10E)-geranylgeranyl diphosphate = 15-cis-phytoene + 2 diphosphate. The protein operates within carotenoid biosynthesis; beta-carotene biosynthesis. It participates in carotenoid biosynthesis; phytoene biosynthesis; all-trans-phytoene from geranylgeranyl diphosphate: step 1/1. Functionally, bifunctional enzyme that catalyzes the reactions from geranylgeranyl diphosphate to phytoene (phytoene synthase) and lycopene to beta-carotene via the intermediate gamma-carotene (lycopene cyclase). The cyclase preferentially catalyzes the symmetric cyclization of both ends of the substrate to produce dicyclic carotenoids. Beta-carotene is further processed to the acidic carotenoid astaxanthin. The protein is Bifunctional lycopene cyclase/phytoene synthase of Phaffia rhodozyma (Yeast).